The chain runs to 574 residues: Aspartate--tRNA ligase (574 aa).

E169 provides a ligand contact to L-aspartate. The interval Q193–K196 is aspartate. L-aspartate is bound at residue R215. Residues R215 to E217 and Q224 each bind ATP. Position 437 (H437) interacts with L-aspartate. Residue E471 participates in ATP binding. Residue R478 participates in L-aspartate binding. G523–R526 lines the ATP pocket.

Belongs to the class-II aminoacyl-tRNA synthetase family. Type 1 subfamily. Homodimer.

It localises to the cytoplasm. It carries out the reaction tRNA(Asp) + L-aspartate + ATP = L-aspartyl-tRNA(Asp) + AMP + diphosphate. Its function is as follows. Catalyzes the attachment of L-aspartate to tRNA(Asp) in a two-step reaction: L-aspartate is first activated by ATP to form Asp-AMP and then transferred to the acceptor end of tRNA(Asp). This chain is Aspartate--tRNA ligase, found in Mycoplasma mycoides subsp. mycoides SC (strain CCUG 32753 / NCTC 10114 / PG1).